Consider the following 449-residue polypeptide: Jacalin-related lectin 20 (449 aa).

Disordered regions lie at residues 1 to 20 (MAQR…DDGA) and 294 to 314 (APPI…GDGG). N-acetylalanine is present on A2. Jacalin-type lectin domains lie at 2-144 (AQRL…YFTP), 147-294 (PIKQ…HFGA), and 303-446 (TEKL…TVAP).

The protein belongs to the jacalin lectin family.

The sequence is that of Jacalin-related lectin 20 (JAL20) from Arabidopsis thaliana (Mouse-ear cress).